The chain runs to 117 residues: Large ribosomal subunit protein bL20 (117 aa).

The protein belongs to the bacterial ribosomal protein bL20 family.

In terms of biological role, binds directly to 23S ribosomal RNA and is necessary for the in vitro assembly process of the 50S ribosomal subunit. It is not involved in the protein synthesizing functions of that subunit. The protein is Large ribosomal subunit protein bL20 of Marinobacter nauticus (strain ATCC 700491 / DSM 11845 / VT8) (Marinobacter aquaeolei).